Here is a 230-residue protein sequence, read N- to C-terminus: Large ribosomal subunit protein uL1 (230 aa).

It belongs to the universal ribosomal protein uL1 family. In terms of assembly, part of the 50S ribosomal subunit.

Functionally, binds directly to 23S rRNA. The L1 stalk is quite mobile in the ribosome, and is involved in E site tRNA release. Its function is as follows. Protein L1 is also a translational repressor protein, it controls the translation of the L11 operon by binding to its mRNA. This is Large ribosomal subunit protein uL1 from Acholeplasma laidlawii (strain PG-8A).